We begin with the raw amino-acid sequence, 227 residues long: Enolase-phosphatase E1 (227 aa).

The protein belongs to the HAD-like hydrolase superfamily. MasA/MtnC family. In terms of assembly, monomer. Mg(2+) is required as a cofactor.

The enzyme catalyses 5-methylsulfanyl-2,3-dioxopentyl phosphate + H2O = 1,2-dihydroxy-5-(methylsulfanyl)pent-1-en-3-one + phosphate. The protein operates within amino-acid biosynthesis; L-methionine biosynthesis via salvage pathway; L-methionine from S-methyl-5-thio-alpha-D-ribose 1-phosphate: step 3/6. It functions in the pathway amino-acid biosynthesis; L-methionine biosynthesis via salvage pathway; L-methionine from S-methyl-5-thio-alpha-D-ribose 1-phosphate: step 4/6. Bifunctional enzyme that catalyzes the enolization of 2,3-diketo-5-methylthiopentyl-1-phosphate (DK-MTP-1-P) into the intermediate 2-hydroxy-3-keto-5-methylthiopentenyl-1-phosphate (HK-MTPenyl-1-P), which is then dephosphorylated to form the acireductone 1,2-dihydroxy-3-keto-5-methylthiopentene (DHK-MTPene). This Pseudomonas syringae pv. tomato (strain ATCC BAA-871 / DC3000) protein is Enolase-phosphatase E1.